A 234-amino-acid polypeptide reads, in one-letter code: Venom allergen 3 (234 aa).

An N-terminal signal peptide occupies residues 1–22 (MELIVSILWLAITAENLANTLA). 4 cysteine pairs are disulfide-bonded: Cys-26/Cys-41, Cys-31/Cys-125, Cys-52/Cys-118, and Cys-198/Cys-216. In terms of domain architecture, SCP spans 69–218 (VNKHNELRQR…WTKHYLVCNY (150 aa)). The tract at residues 80-99 (ASGKEMRGTNGPQPPAVKMP) is disordered.

The protein belongs to the CRISP family. Expressed by the venom gland.

Its subcellular location is the secreted. The protein is Venom allergen 3 of Solenopsis invicta (Red imported fire ant).